The primary structure comprises 300 residues: MKTGNQFNTVALVGRSNTPGIAEPLATLAGCIAKLGFDVVFEADTAREIGISGYPALTPAEIGARADVAVVLGGDGTMLGIGRQLAPYKTPLIGINHGRLGFITDIAAADMQALVPVILSGKFEREERSLLEARIVRNGEPIYHALAFNDVVVNRSGFSGMVELRASVDGRYMYNQRSDGLIVATPTGSTAYALSSAGPILHPQLQGVVLVPIAPHALSNRPIVLPDDSKIAIQIVAGRDVNVNFDMQSFTALELNDTIEVRRSKHTVPFLHPIGYSYYATLRKKLHWNEHASNEDDKAS.

The active-site Proton acceptor is Asp-75. NAD(+) is bound by residues 75–76 (DG), 149–150 (ND), Arg-177, Asp-179, 190–195 (TAYALS), Ala-214, and Gln-248.

Belongs to the NAD kinase family. A divalent metal cation is required as a cofactor.

Its subcellular location is the cytoplasm. It carries out the reaction NAD(+) + ATP = ADP + NADP(+) + H(+). Involved in the regulation of the intracellular balance of NAD and NADP, and is a key enzyme in the biosynthesis of NADP. Catalyzes specifically the phosphorylation on 2'-hydroxyl of the adenosine moiety of NAD to yield NADP. The protein is NAD kinase of Burkholderia vietnamiensis (strain G4 / LMG 22486) (Burkholderia cepacia (strain R1808)).